The primary structure comprises 391 residues: Phosphoglycerate kinase (391 aa).

Residues 21-23, Arg36, 59-62, Arg113, and Arg146 each bind substrate; these read DLN and HLGR. ATP contacts are provided by residues Lys197, Glu319, and 345 to 348; that span reads GGDT.

The protein belongs to the phosphoglycerate kinase family. Monomer.

It is found in the cytoplasm. It carries out the reaction (2R)-3-phosphoglycerate + ATP = (2R)-3-phospho-glyceroyl phosphate + ADP. It participates in carbohydrate degradation; glycolysis; pyruvate from D-glyceraldehyde 3-phosphate: step 2/5. The protein is Phosphoglycerate kinase of Shewanella woodyi (strain ATCC 51908 / MS32).